Reading from the N-terminus, the 1692-residue chain is Cullin-7 (1692 aa).

A CPH domain is found at 348-421 (RTAFASVNTY…HWHMLEILGF (74 aa)). A DOC domain is found at 791 to 970 (PIQIPFFDVF…HTRLFYMVRA (180 aa)). The segment covering 1319 to 1335 (VAHEDSGKEHKSKKEDA) has biased composition (basic and acidic residues). The interval 1319–1374 (VAHEDSGKEHKSKKEDAAGETAAVAMADEEEEEGKKEEGEEEEGEGEEELEEEEER) is disordered. Residues 1357–1374 (GEEEEGEGEEELEEEEER) show a composition bias toward acidic residues. Residue Lys1570 forms a Glycyl lysine isopeptide (Lys-Gly) (interchain with G-Cter in NEDD8) linkage.

The protein belongs to the cullin family. In terms of assembly, component of the 3M complex, composed of core components CUL7, CCDC8 and OBSL1. Component of the Cul7-RING(FBXW8) complex consisting of CUL7, RBX1, SKP1 and FBXW8. Within the Cul7-RING(FBXW8) complex interacts with FBXW8 and RBX1, but not with SKP1. Interacts with CUL1 (via the C-terminal domain); the interaction seems to be mediated by FBXW8; it is likely specific to FBXW8, but not other F-box proteins. Interacts (via the CPH domain) with p53/TP53; the interaction preferentially involves tetrameric and dimeric p53/TP53; this interaction recruits p53/TP53 for ubiquitination by neddylated CUL1-RBX1. The CUL7-CUL9 heterodimer seems to interact specifically with p53/TP53. Interacts with FBXW8; interaction is mutually exclusive of binding to CUL9 or p53/TP53. Interacts with CUL9; leading to inhibited CUL9 activity. Interacts with OBSL1. Interacts (as part of the 3M complex) with HDAC4 and HDAC5; it is negatively regulated by ANKRA2.

Its subcellular location is the cytoplasm. The protein localises to the cytoskeleton. The protein resides in the microtubule organizing center. It is found in the centrosome. It localises to the perinuclear region. Its subcellular location is the golgi apparatus. It functions in the pathway protein modification; protein ubiquitination. In terms of biological role, core component of the 3M and Cul7-RING(FBXW8) complexes, which mediate the ubiquitination and subsequent proteasomal degradation of target proteins. Core component of the 3M complex, a complex required to regulate microtubule dynamics and genome integrity. It is unclear how the 3M complex regulates microtubules, it could act by controlling the level of a microtubule stabilizer. The Cul7-RING(FBXW8) complex alone lacks ubiquitination activity and does not promote polyubiquitination and proteasomal degradation of p53/TP53. However it mediates recruitment of p53/TP53 for ubiquitination by neddylated CUL1-RBX1. Interaction with CUL9 is required to inhibit CUL9 activity and ubiquitination of BIRC5. The Cul7-RING(FBXW8) complex also mediates ubiquitination and consequent degradation of target proteins such as GORASP1, IRS1 and MAP4K1/HPK1. Ubiquitination of GORASP1 regulates Golgi morphogenesis and dendrite patterning in brain. Mediates ubiquitination and degradation of IRS1 in a mTOR-dependent manner: the Cul7-RING(FBXW8) complex recognizes and binds IRS1 previously phosphorylated by S6 kinase (RPS6KB1 or RPS6KB2). The Cul7-RING(FBXW8) complex also mediates ubiquitination of MAP4K1/HPK1: recognizes and binds autophosphorylated MAP4K1/HPK1, leading to its degradation, thereby affecting cell proliferation and differentiation. Acts as a regulator in trophoblast cell epithelial-mesenchymal transition and placental development. While the Cul7-RING(FBXW8) and the 3M complexes are associated and involved in common processes, CUL7 and the Cul7-RING(FBXW8) complex may have additional functions. Probably plays a role in the degradation of proteins involved in endothelial proliferation and/or differentiation. The sequence is that of Cullin-7 (Cul7) from Rattus norvegicus (Rat).